The sequence spans 299 residues: Ethylmalonyl-CoA decarboxylase (299 aa).

The protein belongs to the enoyl-CoA hydratase/isomerase family.

It localises to the cytoplasm. The protein resides in the cytosol. It catalyses the reaction (2S)-ethylmalonyl-CoA + H(+) = butanoyl-CoA + CO2. It carries out the reaction (S)-methylmalonyl-CoA + H(+) = propanoyl-CoA + CO2. The catalysed reaction is (2R)-ethylmalonyl-CoA + H(+) = butanoyl-CoA + CO2. Decarboxylates ethylmalonyl-CoA, a potentially toxic metabolite, to form butyryl-CoA, suggesting it might be involved in metabolite proofreading. Acts preferentially on (S)-ethylmalonyl-CoA but also has some activity on the (R)-isomer. Also has methylmalonyl-CoA decarboxylase activity at lower level. The sequence is that of Ethylmalonyl-CoA decarboxylase (echdc1) from Xenopus tropicalis (Western clawed frog).